The primary structure comprises 691 residues: Inactive TPR repeat-containing thioredoxin TTL3 (691 aa).

2 disordered regions span residues 1–153 and 174–209; these read MSHS…AVSP and MASRTSSRTETLCTGTGNYGHGNVVRSGGGGGTSGK. A Phosphoserine modification is found at serine 8. Basic and acidic residues predominate over residues 19-39; that stretch reads RFRDLQRNDDDVNKPDFRELD. Residues serine 42 and serine 45 each carry the phosphoserine modification. The segment covering 51-79 has biased composition (low complexity); it reads GSASSSAAATPTSSSGSSGSASGKPSVSS. A compositionally biased stretch (basic and acidic residues) spans 83-93; that stretch reads KRLDDAYKSHS. 3 stretches are compositionally biased toward polar residues: residues 94 to 108, 118 to 140, and 175 to 189; these read GELSSPGSGMPTTTR, SSTGTPLIFSGSSFTSATSHTSP, and ASRTSSRTETLCTGT. TPR repeat units lie at residues 220-253, 255-287, 289-321, 327-362, 412-445, 458-491, 492-525, and 527-559; these read PEELKRMGNDMYRRGSFSEALSLYDRAILISPGN, AYRSNRAAALTALRRLGEAVKECLEAVRIDPSY, RAHQRLASLYLRLGEAENARRHICFSGQCPDQA, QTLEKHLRRCWEARKIGDWKTAIKETDAAIANGADS, AYVLCIQAQVDMALGRFENAVVKAERAAMLDQTN, VVRARTRGNELFSSGRFSEACVAYGDGLKQDDSN, SVLYCNRAACWYKLGLWEKSVEDCNHALKSQPSY, and KALLRRAASYGKLGRWEDAVKDYEFLRRELPGD. The Thioredoxin domain occupies 596 to 683; it reads DKFKKSVALP…MVCPSHQFLE (88 aa).

As to quaternary structure, interacts with BRL2. As to expression, expressed in embryos and organ primordia in shoot and root. In primary and cauline leaves and petals, is expressed in hydathodes, guard cells, petiole cells and cells associated with differentiating vascular bundles.

Its function is as follows. Involved in osmotic and salt stress tolerance. May play a role in the control of meristematic cell size during osmotic stress. May function as an adapter protein for BRL2 and may be required for signaling affecting leaf vascular tissue pattern formation. The polypeptide is Inactive TPR repeat-containing thioredoxin TTL3 (Arabidopsis thaliana (Mouse-ear cress)).